Consider the following 463-residue polypeptide: Fumarate hydratase class II (463 aa).

Substrate-binding positions include serine 98–threonine 100, histidine 129–aspartate 132, serine 139–asparagine 141, and threonine 187. The interval lysine 121–asparagine 141 is disordered. The Proton donor/acceptor role is filled by histidine 188. Residue serine 318 is part of the active site. Substrate-binding positions include serine 319 and lysine 324–asparagine 326.

The protein belongs to the class-II fumarase/aspartase family. Fumarase subfamily. As to quaternary structure, homotetramer.

It localises to the cytoplasm. It catalyses the reaction (S)-malate = fumarate + H2O. It functions in the pathway carbohydrate metabolism; tricarboxylic acid cycle; (S)-malate from fumarate: step 1/1. Involved in the TCA cycle. Catalyzes the stereospecific interconversion of fumarate to L-malate. The polypeptide is Fumarate hydratase class II (Rickettsia conorii (strain ATCC VR-613 / Malish 7)).